A 160-amino-acid chain; its full sequence is Phosphopantetheine adenylyltransferase (160 aa).

S8 lines the substrate pocket. ATP is bound by residues 8 to 9 (SF) and H16. 3 residues coordinate substrate: K40, L74, and K88. Residues 89–91 (GLR), E99, and 124–130 (YSFVSST) contribute to the ATP site.

Belongs to the bacterial CoaD family. Homohexamer. Mg(2+) serves as cofactor.

The protein resides in the cytoplasm. The catalysed reaction is (R)-4'-phosphopantetheine + ATP + H(+) = 3'-dephospho-CoA + diphosphate. The protein operates within cofactor biosynthesis; coenzyme A biosynthesis; CoA from (R)-pantothenate: step 4/5. Functionally, reversibly transfers an adenylyl group from ATP to 4'-phosphopantetheine, yielding dephospho-CoA (dPCoA) and pyrophosphate. The chain is Phosphopantetheine adenylyltransferase from Thermus thermophilus (strain ATCC BAA-163 / DSM 7039 / HB27).